Here is a 461-residue protein sequence, read N- to C-terminus: MEKCSHESGRHSAENDGKYDITGSTATNVVDGFTMVAVGDVIVSRTLANGHHPGFSEIVELLRAADVTFGNMETLIFDIRSFNGTPQAEYGGAYHVSLPEIGPDLKAMGFNIMGRANNHSLDWGVEGMRETSRILDESGIIHAGVGESRAQASAARLLETARGRVALLSCATSFTPMSRACDPAGEAPARPGVNALRLERSVVVEPDMLESLRKIRDALPNPGPKHDDREMLVLAGTTYRTGKDVGYTYAANTRDLADILRNVRRGKQYSDFCIFTNHAHEPGNWSEEPADFEQALARKLIDAGADAYVGHGPHRLRGIEIYKRRPIFYSLGNFFYDDLRTPVGADMYDVYDKDPQVDTDAEVTAAEETMGYPTAAGFIGALAEPVYYESVVAVSRFEENQLAELRLYPIELGYSKRLANRGVPSLAPRPQAISILERLQRLSEPFGTRITIEDRVGLIRL.

The segment covering 1–19 (MEKCSHESGRHSAENDGKY) has biased composition (basic and acidic residues). The interval 1–21 (MEKCSHESGRHSAENDGKYDI) is disordered.

It belongs to the CapA family.

Could be involved in the biosynthesis of a cell wall component. This is an uncharacterized protein from Sinorhizobium fredii (strain NBRC 101917 / NGR234).